The chain runs to 167 residues: uncharacterized protein (167 aa).

It localises to the plastid. The protein resides in the chloroplast. This is an uncharacterized protein from Mesostigma viride (Green alga).